We begin with the raw amino-acid sequence, 434 residues long: MNIVVVGLSHKTASVEIREKIAFAPTQMEKPLRMLIAIDDIAEAVIVSTCNRVELYASTRDVAGGMARLKRFLGDYHGVPVEVLEPHLYSHHGEAAIRHVFRVAASLDSMVVGEPQILGQIKTAYGYAAEFRTSGIILNRFLHKAFSVAKRVRTETKIASSAVSVSFAAVELARKIFGDLSDKTVMLIGAGEMCELAAKHFLNNGARGVMVTNRTYERAERLAEEFEGKAIHFEDLFDQLHKADIVLSSTGATHYIIRPKDIDEVIRRRKMKPMFFIDIAVPRDIDPKVNDVENVYLYDMDDLQNVVASNLQQRAEEAKKAEGIIEEEIGQFYKWISSLEVTPTIVALRSKFEDVRRAELEKTLSAWKDLPPDGAKRLEALTAAIVNKLLHPPTATLKRTGQGGRTDLYVDALRTLFDLQTELPEPEGSLELEE.

Substrate-binding positions include 49–52, Ser109, 114–116, and Gln120; these read TCNR and EPQ. The active-site Nucleophile is Cys50. Position 189–194 (189–194) interacts with NADP(+); that stretch reads GAGEMC.

It belongs to the glutamyl-tRNA reductase family. As to quaternary structure, homodimer.

It carries out the reaction (S)-4-amino-5-oxopentanoate + tRNA(Glu) + NADP(+) = L-glutamyl-tRNA(Glu) + NADPH + H(+). It functions in the pathway porphyrin-containing compound metabolism; protoporphyrin-IX biosynthesis; 5-aminolevulinate from L-glutamyl-tRNA(Glu): step 1/2. Catalyzes the NADPH-dependent reduction of glutamyl-tRNA(Glu) to glutamate 1-semialdehyde (GSA). This chain is Glutamyl-tRNA reductase, found in Geobacter sulfurreducens (strain ATCC 51573 / DSM 12127 / PCA).